We begin with the raw amino-acid sequence, 391 residues long: 3-ketoacyl-CoA thiolase (391 aa).

Cys95 (acyl-thioester intermediate) is an active-site residue. Catalysis depends on proton acceptor residues His347 and Cys377.

This sequence belongs to the thiolase-like superfamily. Thiolase family. As to quaternary structure, heterotetramer of two alpha chains (FadB) and two beta chains (FadA).

The protein resides in the cytoplasm. It carries out the reaction an acyl-CoA + acetyl-CoA = a 3-oxoacyl-CoA + CoA. The protein operates within lipid metabolism; fatty acid beta-oxidation. Its function is as follows. Catalyzes the final step of fatty acid oxidation in which acetyl-CoA is released and the CoA ester of a fatty acid two carbons shorter is formed. The sequence is that of 3-ketoacyl-CoA thiolase from Pseudomonas syringae pv. syringae (strain B728a).